Here is a 663-residue protein sequence, read N- to C-terminus: UvrABC system protein B (663 aa).

A Helicase ATP-binding domain is found at 27-414; that stretch reads KNIENGVKDQ…SDNHIAEQLI (388 aa). Residue 40–47 participates in ATP binding; that stretch reads GVTGSGKT. Positions 93–116 match the Beta-hairpin motif; it reads YYDYYQPEAYIKTTDTYIEKDSSV. The Helicase C-terminal domain occupies 432 to 594; that stretch reads QVDDLLDEIR…IDPKSIIKEI (163 aa). The UVR domain occupies 624-659; it reads EKEITKLEKKIKKLVEELDFEQAIILRDEMLKLKEL.

The protein belongs to the UvrB family. In terms of assembly, forms a heterotetramer with UvrA during the search for lesions. Interacts with UvrC in an incision complex.

It localises to the cytoplasm. Its function is as follows. The UvrABC repair system catalyzes the recognition and processing of DNA lesions. A damage recognition complex composed of 2 UvrA and 2 UvrB subunits scans DNA for abnormalities. Upon binding of the UvrA(2)B(2) complex to a putative damaged site, the DNA wraps around one UvrB monomer. DNA wrap is dependent on ATP binding by UvrB and probably causes local melting of the DNA helix, facilitating insertion of UvrB beta-hairpin between the DNA strands. Then UvrB probes one DNA strand for the presence of a lesion. If a lesion is found the UvrA subunits dissociate and the UvrB-DNA preincision complex is formed. This complex is subsequently bound by UvrC and the second UvrB is released. If no lesion is found, the DNA wraps around the other UvrB subunit that will check the other stand for damage. The protein is UvrABC system protein B of Fusobacterium nucleatum subsp. nucleatum (strain ATCC 25586 / DSM 15643 / BCRC 10681 / CIP 101130 / JCM 8532 / KCTC 2640 / LMG 13131 / VPI 4355).